A 109-amino-acid polypeptide reads, in one-letter code: Large ribosomal subunit protein uL22 (109 aa).

It belongs to the universal ribosomal protein uL22 family. Part of the 50S ribosomal subunit.

Functionally, this protein binds specifically to 23S rRNA; its binding is stimulated by other ribosomal proteins, e.g. L4, L17, and L20. It is important during the early stages of 50S assembly. It makes multiple contacts with different domains of the 23S rRNA in the assembled 50S subunit and ribosome. Its function is as follows. The globular domain of the protein is located near the polypeptide exit tunnel on the outside of the subunit, while an extended beta-hairpin is found that lines the wall of the exit tunnel in the center of the 70S ribosome. This chain is Large ribosomal subunit protein uL22, found in Methylobacillus flagellatus (strain ATCC 51484 / DSM 6875 / VKM B-1610 / KT).